An 862-amino-acid chain; its full sequence is Leucine--tRNA ligase (862 aa).

The 'HIGH' region motif lies at 42-52 (PYPSGRLHMGH). The 'KMSKS' region motif lies at 622-626 (KMSKS). Residue K625 participates in ATP binding.

It belongs to the class-I aminoacyl-tRNA synthetase family.

It localises to the cytoplasm. It catalyses the reaction tRNA(Leu) + L-leucine + ATP = L-leucyl-tRNA(Leu) + AMP + diphosphate. This Vibrio campbellii (strain ATCC BAA-1116) protein is Leucine--tRNA ligase.